The chain runs to 316 residues: Zinc finger protein 330 (316 aa).

The tract at residues 1-24 is disordered; sequence MPKKKTGARKKAENRREREKQLRA. Positions 3-11 match the Nuclear localization signal motif; that stretch reads KKKTGARKK. The segment covering 10–22 has biased composition (basic and acidic residues); that stretch reads KKAENRREREKQL. 4 C4-type zinc fingers span residues 42 to 58, 67 to 104, 129 to 149, and 175 to 189; these read CDKCQRRQKNRAFCYFC, CAQCGKTKCMMKSSDCVIKHAGVYSTGLAMVGAICDFC, CVECERGVWDHGGRIFSCSFC, and CVSCNRLGQHSCLRC. The tract at residues 227 to 299 is disordered; sequence SMSTRSLKFG…ESSDLFNNLN (73 aa). A compositionally biased stretch (acidic residues) spans 268–291; the sequence is DDDEEEDEAEDEEEEDGKDSDAES. S287 carries the phosphoserine modification.

This sequence belongs to the NOA36 family.

It is found in the nucleus. It localises to the nucleolus. The protein resides in the chromosome. The protein localises to the centromere. The sequence is that of Zinc finger protein 330 (Znf330) from Mus musculus (Mouse).